The primary structure comprises 214 residues: Probable chorismate pyruvate-lyase (214 aa).

3 residues coordinate substrate: Arg74, Leu112, and Glu173. The tract at residues 183 to 214 (AAPENTGAGGTRLPRRIDTHHTPSKQEERPES) is disordered. Residues 197–214 (RRIDTHHTPSKQEERPES) show a composition bias toward basic and acidic residues.

This sequence belongs to the UbiC family.

It localises to the cytoplasm. It catalyses the reaction chorismate = 4-hydroxybenzoate + pyruvate. It functions in the pathway cofactor biosynthesis; ubiquinone biosynthesis. In terms of biological role, removes the pyruvyl group from chorismate, with concomitant aromatization of the ring, to provide 4-hydroxybenzoate (4HB) for the ubiquinone pathway. This is Probable chorismate pyruvate-lyase from Cupriavidus metallidurans (strain ATCC 43123 / DSM 2839 / NBRC 102507 / CH34) (Ralstonia metallidurans).